A 205-amino-acid chain; its full sequence is Thymidine kinase (205 aa).

ATP contacts are provided by residues 9–16 (SAMNAGKS) and 87–90 (DESQ). The active-site Proton acceptor is the Glu-88. Zn(2+) is bound by residues Cys-145, Cys-147, Cys-182, and His-185.

The protein belongs to the thymidine kinase family. Homotetramer.

The protein resides in the cytoplasm. It carries out the reaction thymidine + ATP = dTMP + ADP + H(+). The chain is Thymidine kinase from Salmonella choleraesuis (strain SC-B67).